Here is a 323-residue protein sequence, read N- to C-terminus: Beta-ketoacyl-[acyl-carrier-protein] synthase III (323 aa).

Catalysis depends on residues cysteine 113 and histidine 250. An ACP-binding region spans residues 251-255; sequence QANKR. Residue asparagine 280 is part of the active site.

The protein belongs to the thiolase-like superfamily. FabH family. In terms of assembly, homodimer.

The protein localises to the cytoplasm. The catalysed reaction is malonyl-[ACP] + acetyl-CoA + H(+) = 3-oxobutanoyl-[ACP] + CO2 + CoA. It functions in the pathway lipid metabolism; fatty acid biosynthesis. Its function is as follows. Catalyzes the condensation reaction of fatty acid synthesis by the addition to an acyl acceptor of two carbons from malonyl-ACP. Catalyzes the first condensation reaction which initiates fatty acid synthesis and may therefore play a role in governing the total rate of fatty acid production. Possesses both acetoacetyl-ACP synthase and acetyl transacylase activities. Its substrate specificity determines the biosynthesis of branched-chain and/or straight-chain of fatty acids. The chain is Beta-ketoacyl-[acyl-carrier-protein] synthase III from Brucella abortus biovar 1 (strain 9-941).